The primary structure comprises 60 residues: Cytotoxin SP15d (60 aa).

4 disulfide bridges follow: Cys-3/Cys-21, Cys-14/Cys-38, Cys-42/Cys-53, and Cys-54/Cys-59.

It belongs to the three-finger toxin family. Short-chain subfamily. Type IA cytotoxin sub-subfamily. In terms of assembly, monomer in solution; Homodimer and oligomer in the presence of negatively charged lipids forming a pore with a size ranging between 20 and 30 Angstroms. As to expression, expressed by the venom gland.

The protein resides in the secreted. Its subcellular location is the target cell membrane. Functionally, shows cytolytic activity on many different cells by forming pore in lipid membranes. In vivo, increases heart rate or kills the animal by cardiac arrest. In addition, it binds to heparin with high affinity, interacts with Kv channel-interacting protein 1 (KCNIP1) in a calcium-independent manner, and binds to integrin alpha-V/beta-3 (ITGAV/ITGB3) with moderate affinity. The protein is Cytotoxin SP15d of Naja atra (Chinese cobra).